A 125-amino-acid chain; its full sequence is Morphine 6-dehydrogenase (125 aa).

Residues 9 to 18 (GHSIPVLGFI) and 74 to 111 (SALGSSRDPWKQSPALIALRYQLQRGVVVLAKSFIERE) contribute to the NADP(+) site.

It belongs to the aldo/keto reductase family. As to quaternary structure, monomer. The N-terminus is blocked.

It localises to the cytoplasm. The catalysed reaction is morphine + NAD(+) = morphinone + NADH + H(+). It catalyses the reaction morphine + NADP(+) = morphinone + NADPH + H(+). Its activity is regulated as follows. Strongly inhibited by sulfhydryl reagents and quercetin, but not by pyrazole, barbital and indomethacine. Functionally, catalyzes the dehydrogenation of morphine to morphinone. Uses both NAD and NADP, but the activity is much greater with NAD than with NADP. This Oryctolagus cuniculus (Rabbit) protein is Morphine 6-dehydrogenase.